A 318-amino-acid chain; its full sequence is Methionyl-tRNA formyltransferase (318 aa).

Ser-112–Pro-115 serves as a coordination point for (6S)-5,6,7,8-tetrahydrofolate.

The protein belongs to the Fmt family.

It catalyses the reaction L-methionyl-tRNA(fMet) + (6R)-10-formyltetrahydrofolate = N-formyl-L-methionyl-tRNA(fMet) + (6S)-5,6,7,8-tetrahydrofolate + H(+). Its function is as follows. Attaches a formyl group to the free amino group of methionyl-tRNA(fMet). The formyl group appears to play a dual role in the initiator identity of N-formylmethionyl-tRNA by promoting its recognition by IF2 and preventing the misappropriation of this tRNA by the elongation apparatus. The chain is Methionyl-tRNA formyltransferase from Shewanella baltica (strain OS195).